A 249-amino-acid chain; its full sequence is Transmembrane protein 106C (249 aa).

A disordered region spans residues 1 to 26; that stretch reads MGSRHSTYAHRPFSKRRKADDTEDSL. A lipid anchor (N-myristoyl glycine) is attached at Gly-2. Helical transmembrane passes span 86–106 and 197–217; these read YVLLSILLCLLASGLVVFFLF and SYVYFFCTLPYIGVHNVVVFV.

Belongs to the TMEM106 family. As to quaternary structure, interacts with TMEM106B.

It localises to the endoplasmic reticulum membrane. The protein localises to the membrane. In Bos taurus (Bovine), this protein is Transmembrane protein 106C (TMEM106C).